The chain runs to 332 residues: Fructose-bisphosphate aldolase (332 aa).

Serine 56 lines the D-glyceraldehyde 3-phosphate pocket. The active-site Proton donor is aspartate 93. Zn(2+)-binding residues include histidine 94, aspartate 115, glutamate 147, and histidine 191. Glycine 192 contacts dihydroxyacetone phosphate. Histidine 234 is a Zn(2+) binding site. Dihydroxyacetone phosphate is bound by residues 235-237 (GAS) and 277-280 (NIDS).

This sequence belongs to the class II fructose-bisphosphate aldolase family. As to quaternary structure, homodimer. Zn(2+) is required as a cofactor.

The catalysed reaction is beta-D-fructose 1,6-bisphosphate = D-glyceraldehyde 3-phosphate + dihydroxyacetone phosphate. Its pathway is carbohydrate degradation; glycolysis; D-glyceraldehyde 3-phosphate and glycerone phosphate from D-glucose: step 4/4. Its function is as follows. Catalyzes the aldol condensation of dihydroxyacetone phosphate (DHAP or glycerone-phosphate) with glyceraldehyde 3-phosphate (G3P) to form fructose 1,6-bisphosphate (FBP) in gluconeogenesis and the reverse reaction in glycolysis. This Treponema pallidum (strain Nichols) protein is Fructose-bisphosphate aldolase (fba).